A 199-amino-acid chain; its full sequence is Imidazoleglycerol-phosphate dehydratase (199 aa).

It belongs to the imidazoleglycerol-phosphate dehydratase family.

It is found in the cytoplasm. It catalyses the reaction D-erythro-1-(imidazol-4-yl)glycerol 3-phosphate = 3-(imidazol-4-yl)-2-oxopropyl phosphate + H2O. It participates in amino-acid biosynthesis; L-histidine biosynthesis; L-histidine from 5-phospho-alpha-D-ribose 1-diphosphate: step 6/9. The sequence is that of Imidazoleglycerol-phosphate dehydratase from Lactococcus lactis subsp. cremoris (strain MG1363).